The following is a 315-amino-acid chain: Pantothenate synthetase (315 aa).

Residue 45 to 52 (MGALHEGH) coordinates ATP. Residue histidine 52 is the Proton donor of the active site. Glutamine 77 provides a ligand contact to (R)-pantoate. Glutamine 77 contributes to the beta-alanine binding site. 163 to 166 (GEKD) contacts ATP. Glutamine 169 contributes to the (R)-pantoate binding site. Residues valine 192 and 200 to 203 (MSSR) each bind ATP.

This sequence belongs to the pantothenate synthetase family. In terms of assembly, homodimer.

The protein localises to the cytoplasm. The enzyme catalyses (R)-pantoate + beta-alanine + ATP = (R)-pantothenate + AMP + diphosphate + H(+). The protein operates within cofactor biosynthesis; (R)-pantothenate biosynthesis; (R)-pantothenate from (R)-pantoate and beta-alanine: step 1/1. Functionally, catalyzes the condensation of pantoate with beta-alanine in an ATP-dependent reaction via a pantoyl-adenylate intermediate. In Mycobacterium ulcerans (strain Agy99), this protein is Pantothenate synthetase.